The chain runs to 174 residues: Protein GrpE (174 aa).

It belongs to the GrpE family. In terms of assembly, homodimer.

Its subcellular location is the cytoplasm. Functionally, participates actively in the response to hyperosmotic and heat shock by preventing the aggregation of stress-denatured proteins, in association with DnaK and GrpE. It is the nucleotide exchange factor for DnaK and may function as a thermosensor. Unfolded proteins bind initially to DnaJ; upon interaction with the DnaJ-bound protein, DnaK hydrolyzes its bound ATP, resulting in the formation of a stable complex. GrpE releases ADP from DnaK; ATP binding to DnaK triggers the release of the substrate protein, thus completing the reaction cycle. Several rounds of ATP-dependent interactions between DnaJ, DnaK and GrpE are required for fully efficient folding. This Methanothermobacter thermautotrophicus (strain ATCC 29096 / DSM 1053 / JCM 10044 / NBRC 100330 / Delta H) (Methanobacterium thermoautotrophicum) protein is Protein GrpE.